The sequence spans 349 residues: UPF0284 protein MA_3887 (349 aa).

Belongs to the UPF0284 family.

The chain is UPF0284 protein MA_3887 from Methanosarcina acetivorans (strain ATCC 35395 / DSM 2834 / JCM 12185 / C2A).